Consider the following 239-residue polypeptide: Sugar fermentation stimulation protein homolog (239 aa).

This sequence belongs to the SfsA family.

The sequence is that of Sugar fermentation stimulation protein homolog from Methanobrevibacter smithii (strain ATCC 35061 / DSM 861 / OCM 144 / PS).